Consider the following 307-residue polypeptide: MISAKMVKDLREKTGAGMMDCKKALTECDGDLEKAVEVLREKGLAAAAKKSGRVAAEGIVSTYISEDMKNGSIVEFNCETDFVSVNELFVELANNLSKQAAFSNVSTAEELLEEKYIADESKLVKDVITELIAKLGENMNLRRIAKLSVDKGVIKSYIHGGGRIGVLVKLACEKEDAKLAEIAKDVAMQVAATNPLFLNRDGVDTDTLEKEKEIYRVQALNEGKPEKVVEKMVMGRINKYYKENCLVEQLWVKNGDYTITKYLQEQSKEIGADITVEAFVRYEKGEGIEKKEEDFAEEVQRQMNQGK.

The interval 80 to 83 (TDFV) is involved in Mg(2+) ion dislocation from EF-Tu.

This sequence belongs to the EF-Ts family.

The protein localises to the cytoplasm. Functionally, associates with the EF-Tu.GDP complex and induces the exchange of GDP to GTP. It remains bound to the aminoacyl-tRNA.EF-Tu.GTP complex up to the GTP hydrolysis stage on the ribosome. This is Elongation factor Ts from Clostridium botulinum (strain Loch Maree / Type A3).